The following is a 29-amino-acid chain: Beta-theraphotoxin-Gr1b (29 aa).

3 cysteine pairs are disulfide-bonded: Cys-2–Cys-16, Cys-9–Cys-21, and Cys-15–Cys-25. Leu-29 bears the Leucine amide mark.

This sequence belongs to the neurotoxin 30 (phrixotoxin) family. As to expression, expressed by the venom gland.

The protein localises to the secreted. Inhibits the voltage-gated sodium channels Nav1.1/SCN1A (IC(50)=360 nM), Nav1.2/SCN2A (IC(50)=600 nM), Nav1.3/SCN3A (IC(50)=1280), Nav1.4/SCN4A (IC(50)=330 nM), Nav1.6/SCN8A (IC(50)=1200 nM), Nav1.7/SCN9A (IC(50)=1-40 nM), and voltage-gated potassium channels Kv11.1/KCNH2 (IC(50)=4.8 uM). Induces analgesia in mammals. This analgesia is mediated by a non-opioid receptor related mechanism. This chain is Beta-theraphotoxin-Gr1b, found in Grammostola rosea (Chilean rose tarantula).